A 304-amino-acid chain; its full sequence is N-acetyl-D-glucosamine kinase (304 aa).

Residues 4–11 and 133–140 each bind ATP; these read GFDMGGTK and GVGGGLIV. Zn(2+) is bound by residues histidine 157, cysteine 177, cysteine 179, and cysteine 184.

This sequence belongs to the ROK (NagC/XylR) family. NagK subfamily.

The catalysed reaction is N-acetyl-D-glucosamine + ATP = N-acetyl-D-glucosamine 6-phosphate + ADP + H(+). Its pathway is cell wall biogenesis; peptidoglycan recycling. Catalyzes the phosphorylation of N-acetyl-D-glucosamine (GlcNAc) derived from cell-wall degradation, yielding GlcNAc-6-P. The chain is N-acetyl-D-glucosamine kinase from Yersinia pseudotuberculosis serotype IB (strain PB1/+).